The following is a 643-amino-acid chain: MQKPYVFQEIPVHRPNTPLLDKIDSPAQLRLLNEAELLQLAHELRAFLLYSVGQSGGHFGAGLGVVELTVALHYAFNTPEDRLVWDVGHQAYPHKILTGRREQMLTIRQKDGLAAFPRREESPYDTFGVGHSSTSISAALGMAIAARLQNQPRKAIAVIGDGAMTAGMAFEALNHAADTKADLLVILNDNDMSISRNVGGLSNYFARLLASKTYNQMRDSGKRVLQGAPSLMELARKTEEHFKGMVAPGTLFEELGFNYIGPIDGHDLPRLVETLNNIKELNGPQFLHVVTKKGKGFAHAESDPIGYHAINKIEPKPKVQDTAKAPKKPRYSNIFGQWLCDMAEQDASLVGITPAMCEGSDLIEFSKRFPERYYDVAIAEQHAVTLAAGLACDGAKPVVAIYSTFLQRAYDQLIHDVAIQNLDVLFAIDRAGLVGEDGPTHAGSFDLTFLRCIPNMLIMAPSDEDETRKMLTTGYQYTGPAAVRYPRGNGPGADISPGLESLEIGKANLRRRGAQTVILNFGALLPAALGVAEESNFTVVDMRFIKPLDQNMILEMAGSHDLLVTLEENCILGGAGSGVIEFLASQGIAMPVLQLGLPDEFIEHGKPAELHKEVGLDAQGIANAIKKRLKSLNLASPKTGTSA.

Residues histidine 89 and 130–132 (GHS) each bind thiamine diphosphate. Position 161 (aspartate 161) interacts with Mg(2+). Thiamine diphosphate-binding positions include 162-163 (GA), asparagine 190, phenylalanine 297, and glutamate 380. Asparagine 190 lines the Mg(2+) pocket.

The protein belongs to the transketolase family. DXPS subfamily. As to quaternary structure, homodimer. The cofactor is Mg(2+). Requires thiamine diphosphate as cofactor.

It carries out the reaction D-glyceraldehyde 3-phosphate + pyruvate + H(+) = 1-deoxy-D-xylulose 5-phosphate + CO2. It participates in metabolic intermediate biosynthesis; 1-deoxy-D-xylulose 5-phosphate biosynthesis; 1-deoxy-D-xylulose 5-phosphate from D-glyceraldehyde 3-phosphate and pyruvate: step 1/1. Functionally, catalyzes the acyloin condensation reaction between C atoms 2 and 3 of pyruvate and glyceraldehyde 3-phosphate to yield 1-deoxy-D-xylulose-5-phosphate (DXP). This Hahella chejuensis (strain KCTC 2396) protein is 1-deoxy-D-xylulose-5-phosphate synthase.